Consider the following 745-residue polypeptide: Cellulose synthase-like protein E2 (745 aa).

Positions 1–14 (MAGSGGGVVSGGRQ) are enriched in gly residues. The segment at 1-20 (MAGSGGGVVSGGRQRGPPLF) is disordered. 2 consecutive transmembrane segments (helical) span residues 29–49 (AMAA…LIWL) and 66–86 (WAWL…VLTL). Residues Asp155 and Asp458 contribute to the active site. Transmembrane regions (helical) follow at residues 541-561 (FPTL…ISLF), 568-588 (WFIP…AESL), 658-678 (AMFV…VLGI), 686-706 (GPGG…IVAI), and 723-743 (LPAS…ILSI).

The protein belongs to the glycosyltransferase 2 family. Plant cellulose synthase-like E subfamily.

The protein localises to the golgi apparatus membrane. Thought to be a Golgi-localized beta-glycan synthase that polymerize the backbones of noncellulosic polysaccharides (hemicelluloses) of plant cell wall. This chain is Cellulose synthase-like protein E2 (CSLE2), found in Oryza sativa subsp. japonica (Rice).